We begin with the raw amino-acid sequence, 148 residues long: Caltractin (148 aa).

EF-hand domains are found at residues 4-39 (EQKQEXREAFDLFDTDGSGTIDAKELKVXMXALGFE), 40-75 (PKKEEIQKMISDIDKDGSGTIDFEEFLQMMTAKMGE), 77-112 (DSREEIMKAFRLFDDDQTGKITFKNLKRVAKELGEN), and 113-148 (LTDEEIQEMIDEADRDGDGEINEEEFFRIMKKTSLF). Residues Asp-17, Asp-19, Ser-21, Thr-23, Glu-28, Asp-53, Asp-55, Ser-57, Thr-59, and Glu-64 each contribute to the Ca(2+) site. Ca(2+) contacts are provided by Asp-126, Asp-128, Asp-130, Glu-132, and Glu-137.

It belongs to the centrin family. As to expression, ubiquitous.

In terms of biological role, this calcium-binding protein is found in the basal body complexes (the functional homolog of the centrosome in animal cell). In mitotic cells it is specifically associated with the poles of the mitotic spindles at the sites of the duplicated basal body complexes. This is Caltractin from Spermatozopsis similis (Green alga).